The primary structure comprises 433 residues: Urokinase-type plasminogen activator (433 aa).

Residues 1-20 (MKVWLASLFLCALVVKNSEG) form the signal peptide. An EGF-like domain is found at 28-64 (DESNCGCQNGGVCVSYKYFSRIRRCSCPRKFQGEHCE). 6 disulfides stabilise this stretch: Cys-32–Cys-40, Cys-34–Cys-52, Cys-54–Cys-63, Cys-71–Cys-152, Cys-92–Cys-134, and Cys-123–Cys-147. Residues 35–58 (QNGGVCVSYKYFSRIRRCSCPRKF) form a binds urokinase plasminogen activator surface receptor region. The 82-residue stretch at 71-152 (CYHGNGDSYR…FVQECMVHDC (82 aa)) folds into the Kringle domain. A connecting peptide region spans residues 153–179 (SLSKKPSSSVDQQGFQCGQKALRPRFK). Ser-159 is subject to Phosphoserine. Intrachain disulfides connect Cys-169–Cys-301, Cys-211–Cys-227, Cys-219–Cys-290, Cys-315–Cys-384, Cys-347–Cys-363, and Cys-374–Cys-402. One can recognise a Peptidase S1 domain in the interval 180–426 (IVGGEFTEVE…FLDWIQSHIG (247 aa)). Active-site charge relay system residues include His-226 and Asp-277. Catalysis depends on Ser-378, which acts as the Charge relay system.

It belongs to the peptidase S1 family. In terms of assembly, found in high and low molecular mass forms. Each consists of two chains, A and B. The high molecular mass form contains a long chain A which is cleaved to yield a short chain A. Forms heterodimer with SERPINA5. Binds LRP1B; binding is followed by internalization and degradation. Interacts with MRC2. Interacts with PLAUR. In complex with SERPINE1, interacts with PLAUR/uPAR. Interacts with SORL1 and LRP1, either alone or in complex with SERPINE1; these interactions are abolished in the presence of LRPAP1/RAP. The ternary complex composed of PLAUR-PLAU-PAI1 also interacts with SORLA. In terms of processing, produced as an inactive single-chain protein (pro-uPA or sc-uPA), is processed into the active disulfide-linked two-chain form of PLAU/uPA by a proteolytic event mediated, at least, by TMPRSS4.

The protein localises to the secreted. It carries out the reaction Specific cleavage of Arg-|-Val bond in plasminogen to form plasmin.. Inhibited by SERPINA5. Inhibited by SERPINE1. In terms of biological role, specifically cleaves the zymogen plasminogen to form the active enzyme plasmin. The chain is Urokinase-type plasminogen activator (Plau) from Mus musculus (Mouse).